Here is a 213-residue protein sequence, read N- to C-terminus: Adenylyl-sulfate kinase (213 aa).

The span at 1–17 (MPAHQLDDHNQETRSDD) shows a compositional bias: basic and acidic residues. The disordered stretch occupies residues 1-20 (MPAHQLDDHNQETRSDDENI). ATP is bound at residue 47–54 (GLSGSGKS). Ser-121 serves as the catalytic Phosphoserine intermediate.

It belongs to the APS kinase family.

It catalyses the reaction adenosine 5'-phosphosulfate + ATP = 3'-phosphoadenylyl sulfate + ADP + H(+). It functions in the pathway sulfur metabolism; hydrogen sulfide biosynthesis; sulfite from sulfate: step 2/3. Functionally, catalyzes the synthesis of activated sulfate. In Yersinia pestis, this protein is Adenylyl-sulfate kinase.